Reading from the N-terminus, the 72-residue chain is Beta-defensin 104A (72 aa).

A signal peptide spans 1–22; sequence MRRLVLLLAISLLLYQDLPVRS. Intrachain disulfides connect C30/C57, C37/C51, and C41/C58.

Belongs to the beta-defensin family.

It localises to the secreted. Has antimicrobial activity. In Gorilla gorilla gorilla (Western lowland gorilla), this protein is Beta-defensin 104A (DEFB104A).